A 275-amino-acid polypeptide reads, in one-letter code: Dihydropteroate synthase (275 aa).

The Pterin-binding domain occupies 15-267 (PQIMGILNFT…DVAATSDMLK (253 aa)). A Mg(2+)-binding site is contributed by Asn22. (7,8-dihydropterin-6-yl)methyl diphosphate-binding positions include Thr62, Asp96, Asn115, Asp185, Lys221, and 255–257 (RVH).

The protein belongs to the DHPS family. In terms of assembly, homodimer. It depends on Mg(2+) as a cofactor.

It carries out the reaction (7,8-dihydropterin-6-yl)methyl diphosphate + 4-aminobenzoate = 7,8-dihydropteroate + diphosphate. It participates in cofactor biosynthesis; tetrahydrofolate biosynthesis; 7,8-dihydrofolate from 2-amino-4-hydroxy-6-hydroxymethyl-7,8-dihydropteridine diphosphate and 4-aminobenzoate: step 1/2. Catalyzes the condensation of para-aminobenzoate (pABA) with 6-hydroxymethyl-7,8-dihydropterin diphosphate (DHPt-PP) to form 7,8-dihydropteroate (H2Pte), the immediate precursor of folate derivatives. This chain is Dihydropteroate synthase (folP-A), found in Haemophilus influenzae (strain ATCC 51907 / DSM 11121 / KW20 / Rd).